A 553-amino-acid chain; its full sequence is Probable cytochrome P450 301a1, mitochondrial (553 aa).

A heme-binding site is contributed by Cys-502.

Belongs to the cytochrome P450 family. Requires heme as cofactor.

The protein resides in the mitochondrion membrane. This Drosophila melanogaster (Fruit fly) protein is Probable cytochrome P450 301a1, mitochondrial (Cyp301a1).